The primary structure comprises 741 residues: uncharacterized protein (741 aa).

The span at 1–17 (MDSNTNENNSHASSNER) shows a compositional bias: polar residues. The interval 1-50 (MDSNTNENNSHASSNERQSSEGHDDYLNRNPNSEATEGEEGTHPTTGTQP) is disordered. A compositionally biased stretch (basic and acidic residues) spans 18–27 (QSSEGHDDYL). The RING-type 1; degenerate zinc-finger motif lies at 107–150 (CPICYDDMNENDEKQATKMPCGHIFGKNCLQKWLENHCTCPLCR). Composition is skewed to polar residues over residues 177–193 (GNQGNTAVSQENASNGV), 252–263 (PDSNTSTPTTRS), and 277–302 (NASSRQETTPSDSRPSTLTSLFNAFF). Disordered regions lie at residues 177–214 (GNQGNTAVSQENASNGVHSDFHPSEELNNANTDGRTGV), 238–387 (SATN…NTNR), 500–543 (QPAV…PGIT), 561–619 (ENRM…TPTH), 638–688 (STPS…PQCQ), and 713–741 (RCQQSTSNSENQMDEEIGECPKCRNEEHK). The segment covering 316-332 (TSNLTSNSGSMTNSTST) has biased composition (low complexity). Composition is skewed to polar residues over residues 333–344 (DLPTSNLPSQNA) and 357–386 (PPNLLNLPTASPESTSWLPGSQTNIPANTN). 3 stretches are compositionally biased toward polar residues: residues 563 to 586 (RMNQTRSESSTPAQQSAAGSSINV), 604 to 619 (ENSSEVAGSRNQTPTH), and 652 to 661 (SKVSSGTSTP). The RING-type 2; degenerate zinc finger occupies 687–736 (CQLEDQGICDPNDRFVHFECGHSVHERCQQSTSNSENQMDEEIGECPKCR). Residues 731 to 741 (ECPKCRNEEHK) show a composition bias toward basic and acidic residues.

The protein localises to the nucleus. This is an uncharacterized protein from Schizosaccharomyces pombe (strain 972 / ATCC 24843) (Fission yeast).